Consider the following 196-residue polypeptide: GTP cyclohydrolase-2 (196 aa).

49-53 (RVHSE) serves as a coordination point for GTP. Zn(2+)-binding residues include C54, C65, and C67. Residues Q70, 92 to 94 (EGR), and T114 contribute to the GTP site. Residue D126 is the Proton acceptor of the active site. Residue R128 is the Nucleophile of the active site. Residues T149 and K154 each contribute to the GTP site.

It belongs to the GTP cyclohydrolase II family. Homodimer. The cofactor is Zn(2+).

The catalysed reaction is GTP + 4 H2O = 2,5-diamino-6-hydroxy-4-(5-phosphoribosylamino)-pyrimidine + formate + 2 phosphate + 3 H(+). It functions in the pathway cofactor biosynthesis; riboflavin biosynthesis; 5-amino-6-(D-ribitylamino)uracil from GTP: step 1/4. Its function is as follows. Catalyzes the conversion of GTP to 2,5-diamino-6-ribosylamino-4(3H)-pyrimidinone 5'-phosphate (DARP), formate and pyrophosphate. This Yersinia pestis protein is GTP cyclohydrolase-2.